Consider the following 716-residue polypeptide: Probable basic-leucine zipper transcription factor O (716 aa).

Residues Leu20–Asp142 adopt a coiled-coil conformation. Residues Ser173 to Asn233 form a disordered region. The bZIP domain maps to Lys381–Asp444. The interval Lys387 to Lys403 is basic motif. Residues Ile406–Leu413 are leucine-zipper.

This sequence belongs to the bZIP family.

Its subcellular location is the nucleus. Its function is as follows. Probable transcriptional regulator. This is Probable basic-leucine zipper transcription factor O (bzpO) from Dictyostelium discoideum (Social amoeba).